Consider the following 218-residue polypeptide: MANQEIFDKLTNAIVTQDIAGCAKLTQEALDAGISPLDIITKGLSPGMKIIGDKFEAAEIFLPQIMMSGKAMSSAMEILTPELEKTKVEGEEGTGLAITFVAEGDIHDIGHRLVTTMLGANGFDILDLGVDVLNETVIEEAAKRKGQKIILVGSALMTTSMLGQKDLMDRLREENLRDSVKCMFGGAPVSDKWIDEIGADATAENAAEAAKVALNIMK.

A B12-binding N-terminal domain is found at 1–91 (MANQEIFDKL…ELEKTKVEGE (91 aa)). Residues 94–218 (TGLAITFVAE…AAKVALNIMK (125 aa)) enclose the B12-binding domain. A methylcob(III)alamin-binding site is contributed by His107.

Belongs to the methylamine corrinoid protein family. In terms of assembly, can form a complex with MtmB.

Its pathway is one-carbon metabolism; methanogenesis from methylamine. In terms of biological role, acts as a methyl group carrier between MtmB and MtbA. This is Monomethylamine corrinoid protein 1 (mtmC1) from Methanosarcina mazei (strain ATCC BAA-159 / DSM 3647 / Goe1 / Go1 / JCM 11833 / OCM 88) (Methanosarcina frisia).